The sequence spans 352 residues: Neutral protease 2 homolog ATEG_04941 (352 aa).

Positions 1–19 (MRFTALATAILPLACNVLA) are cleaved as a signal peptide. The propeptide occupies 20 to 175 (LPAKTGEAPK…ASAVKPLDKR (156 aa)). 2 cysteine pairs are disulfide-bonded: Cys181/Cys253 and Cys260/Cys278. His303 contacts Zn(2+). Residue Glu304 is part of the active site. Zn(2+) is bound by residues His307 and Asp318.

The protein belongs to the peptidase M35 family. Zn(2+) serves as cofactor.

The protein resides in the secreted. The catalysed reaction is Preferential cleavage of bonds with hydrophobic residues in P1'. Also 3-Asn-|-Gln-4 and 8-Gly-|-Ser-9 bonds in insulin B chain.. In terms of biological role, secreted metalloproteinase that allows assimilation of proteinaceous substrates. Shows high activities on basic nuclear substrates such as histone and protamine. The sequence is that of Neutral protease 2 homolog ATEG_04941 from Aspergillus terreus (strain NIH 2624 / FGSC A1156).